We begin with the raw amino-acid sequence, 88 residues long: Large ribosomal subunit protein bL27 (88 aa).

Residues 1 to 21 are disordered; that stretch reads MAHKKGTGSTRNGRDSRAQRL.

The protein belongs to the bacterial ribosomal protein bL27 family.

This is Large ribosomal subunit protein bL27 from Picosynechococcus sp. (strain ATCC 27264 / PCC 7002 / PR-6) (Agmenellum quadruplicatum).